We begin with the raw amino-acid sequence, 101 residues long: NAD(P)H-quinone oxidoreductase subunit 4L, chloroplastic (101 aa).

3 helical membrane passes run isoleucine 2–isoleucine 22, methionine 32–phenylalanine 52, and isoleucine 61–leucine 81.

The protein belongs to the complex I subunit 4L family. In terms of assembly, NDH is composed of at least 16 different subunits, 5 of which are encoded in the nucleus.

The protein localises to the plastid. It localises to the chloroplast thylakoid membrane. It catalyses the reaction a plastoquinone + NADH + (n+1) H(+)(in) = a plastoquinol + NAD(+) + n H(+)(out). It carries out the reaction a plastoquinone + NADPH + (n+1) H(+)(in) = a plastoquinol + NADP(+) + n H(+)(out). Functionally, NDH shuttles electrons from NAD(P)H:plastoquinone, via FMN and iron-sulfur (Fe-S) centers, to quinones in the photosynthetic chain and possibly in a chloroplast respiratory chain. The immediate electron acceptor for the enzyme in this species is believed to be plastoquinone. Couples the redox reaction to proton translocation, and thus conserves the redox energy in a proton gradient. The chain is NAD(P)H-quinone oxidoreductase subunit 4L, chloroplastic from Platanus occidentalis (Sycamore).